We begin with the raw amino-acid sequence, 78 residues long: D-alanyl carrier protein (78 aa).

Residues 1-78 enclose the Carrier domain; that stretch reads MEFRDQVLDL…KIVAVLEELR (78 aa). Residue Ser-36 is modified to O-(pantetheine 4'-phosphoryl)serine.

It belongs to the DltC family. In terms of processing, 4'-phosphopantetheine is transferred from CoA to a specific serine of apo-DCP.

It is found in the cytoplasm. It functions in the pathway cell wall biogenesis; lipoteichoic acid biosynthesis. Its function is as follows. Carrier protein involved in the D-alanylation of lipoteichoic acid (LTA). The loading of thioester-linked D-alanine onto DltC is catalyzed by D-alanine--D-alanyl carrier protein ligase DltA. The DltC-carried D-alanyl group is further transferred to cell membrane phosphatidylglycerol (PG) by forming an ester bond, probably catalyzed by DltD. D-alanylation of LTA plays an important role in modulating the properties of the cell wall in Gram-positive bacteria, influencing the net charge of the cell wall. The protein is D-alanyl carrier protein of Staphylococcus saprophyticus subsp. saprophyticus (strain ATCC 15305 / DSM 20229 / NCIMB 8711 / NCTC 7292 / S-41).